Reading from the N-terminus, the 283-residue chain is Cyclic AMP-dependent transcription factor ATF-5 (283 aa).

The tract at residues 1–21 (MSLLATLGLELDRALLPASGL) is required for protein stabilization induced by IL1B. An N6-acetyllysine; by EP300 modification is found at K29. Disordered stretches follow at residues 118–154 (DAPL…PQPP) and 168–241 (SEAG…EGEC). An interaction with PTP4A1 region spans residues 119-218 (APLLPPPSPP…GDRKQKKRDQ (100 aa)). 2 stretches are compositionally biased toward pro residues: residues 121–145 (LLPP…PLPL) and 183–203 (PQQP…PYPS). A bZIP domain is found at 209–272 (GDRKQKKRDQ…QYVKDLLIEV (64 aa)). Positions 211–231 (RKQKKRDQNKSAALRYRQRKR) are basic motif. The segment at 237–251 (LEGECQGLEARNREL) is leucine-zipper. S257 carries the post-translational modification Phosphoserine.

This sequence belongs to the bZIP family. Binds DNA as a dimer. Interacts with PTP4A1/PRL-1. Interacts with CCND3, but not with CCND1 or CCND2. Interacts with HSPA1A or HSPA1B; the interaction protects ATF5 from degradation via proteasome-dependent and caspase-dependent processes. Interacts (via C-terminal region) with NPM1 (via C-terminal region); the interaction leads to loss of association between HSPA1A or HSPA1B and ATF5 and promotes ATF5 degradation via proteasome-dependent and caspase-dependent processes. Interacts with NLK; the interaction stabilizes ATF5 at the protein level in a kinase-independent manner. Interacts with alpha-tubulin, gamma-tubulin members TUBGCP2 and TUBGCP4, PCNT; the ATF5:PCNT:polyglutamylated tubulin (PGT) tripartite unites the mother centriole and the pericentriolar material (PCM) in the centrosome. Interacts with CEBPB and EP300; EP300 is required for ATF5 and CEBPB interaction and DNA binding. In terms of processing, acetylated at Lys-29 by EP300, the acetylation enhances the interaction with CEBPB, DNA-binding and transactivation activity. Post-translationally, ubiquitinated by CDC34 and UBE2B in order to be degraded by the proteasome. Cisplatin inhibits ubiquitination and proteasome-mediated degradation by inhibiting the interaction with CDC34. Ubiquitination and degradation by the proteasome are inhibited by NLK in a kinase-independent manner. Phosphorylated by NLK, probably at Ser-92 and Ser-126. As to expression, highly expressed in liver and at lower levels in heart, brain, lung, kidney, adipose tissue, and skeletal muscle. Expressed in some immature and in all mature olfactory sensory neurons (at protein level).

Its subcellular location is the cytoplasm. It localises to the nucleus. The protein localises to the cytoskeleton. It is found in the microtubule organizing center. The protein resides in the centrosome. Functionally, transcription factor that either stimulates or represses gene transcription through binding of different DNA regulatory elements such as cAMP response element (CRE) (consensus: 5'-GTGACGT[AC][AG]-3'), ATF5-specific response element (ARE) (consensus: 5'-C[CT]TCT[CT]CCTT[AT]-3') but also the amino acid response element (AARE), present in many viral and cellular promoters. Critically involved, often in a cell type-dependent manner, in cell survival, proliferation, and differentiation. Its transcriptional activity is enhanced by CCND3 and slightly inhibited by CDK4. Important regulator of the cerebral cortex formation, functions in cerebral cortical neuroprogenitor cells to maintain proliferation and to block differentiation into neurons. Must be down-regulated in order for such cells to exit the cycle and differentiate. Participates in the pathways by which SHH promotes cerebellar granule neuron progenitor cells proliferation. Critical for survival of mature olfactory sensory neurons (OSN), directs expression of OSN-specific genes. May be involved in osteogenic differentiation. Promotes cell proliferation and survival by inducing the expression of EGR1 sinergistically with ELK1. Once acetylated by EP300, binds to ARE sequences on target genes promoters, such as BCL2 and EGR1. Plays an anti-apoptotic role through the transcriptional regulation of BCL2, this function seems to be cell type-dependent. Cooperates with NR1I3/CAR in the transcriptional activation of CYP2B6 in liver. In hepatic cells, represses CRE-dependent transcription and inhibits proliferation by blocking at G2/M phase. May act as a negative regulator of IL1B transduction pathway in liver. Upon IL1B stimulus, cooperates with NLK to activate the transactivation activity of C/EBP subfamily members. Besides its function of transcription factor, acts as a cofactor of CEBPB to activate CEBPA and promote adipocyte differentiation. Regulates centrosome dynamics in a cell-cycle- and centriole-age-dependent manner. Forms 9-foci symmetrical ring scaffold around the mother centriole to control centrosome function and the interaction between centrioles and pericentriolar material. This is Cyclic AMP-dependent transcription factor ATF-5 (Atf5) from Mus musculus (Mouse).